The primary structure comprises 354 residues: Pyrimidine monooxygenase RutA (354 aa).

Residues 49-50 (IK), Asn-115, Glu-124, 140-141 (RY), and Ser-189 each bind FMN.

Belongs to the NtaA/SnaA/DszA monooxygenase family. RutA subfamily.

The catalysed reaction is uracil + FMNH2 + NADH + O2 = (Z)-3-ureidoacrylate + FMN + NAD(+) + H2O + H(+). The enzyme catalyses thymine + FMNH2 + NADH + O2 = (Z)-2-methylureidoacrylate + FMN + NAD(+) + H2O + H(+). Its function is as follows. Catalyzes the pyrimidine ring opening between N-3 and C-4 by an unusual flavin hydroperoxide-catalyzed mechanism, adding oxygen atoms in the process to yield ureidoacrylate peracid, that immediately reacts with FMN forming ureidoacrylate and FMN-N(5)-oxide. The FMN-N(5)-oxide reacts spontaneously with NADH to produce FMN. Requires the flavin reductase RutF to regenerate FMN in vivo. This Caulobacter sp. (strain K31) protein is Pyrimidine monooxygenase RutA.